Here is a 365-residue protein sequence, read N- to C-terminus: Peptide chain release factor 2 (365 aa).

Position 252 is an N5-methylglutamine (glutamine 252).

This sequence belongs to the prokaryotic/mitochondrial release factor family. Methylated by PrmC. Methylation increases the termination efficiency of RF2.

Its subcellular location is the cytoplasm. Functionally, peptide chain release factor 2 directs the termination of translation in response to the peptide chain termination codons UGA and UAA. This chain is Peptide chain release factor 2, found in Haemophilus ducreyi (strain 35000HP / ATCC 700724).